The chain runs to 200 residues: Small ribosomal subunit protein eS1 (200 aa).

It belongs to the eukaryotic ribosomal protein eS1 family. Part of the 30S ribosomal subunit.

The polypeptide is Small ribosomal subunit protein eS1 (Thermococcus kodakarensis (strain ATCC BAA-918 / JCM 12380 / KOD1) (Pyrococcus kodakaraensis (strain KOD1))).